A 404-amino-acid polypeptide reads, in one-letter code: Putative CBL-interacting protein kinase 27 (404 aa).

The region spanning 11–266 is the Protein kinase domain; it reads YEMGRVLGHG…VAGLLETPWF (256 aa). ATP is bound by residues 17–25 and K40; that span reads LGHGNFGRV. D134 (proton acceptor) is an active-site residue. Residues 152–181 form an activation loop region; the sequence is DFGLSALACHARPDGLLHTACGTPAYVAPE. The 28-residue stretch at 294–321 folds into the NAF domain; it reads DKDEPPEVLNAFHLISLSEGFDLSPLFE. The tract at residues 335-356 is PPI; sequence AGGTRFATREAASGVVARLEAL.

Belongs to the protein kinase superfamily. CAMK Ser/Thr protein kinase family. SNF1 subfamily. Requires Mn(2+) as cofactor.

The enzyme catalyses L-seryl-[protein] + ATP = O-phospho-L-seryl-[protein] + ADP + H(+). It carries out the reaction L-threonyl-[protein] + ATP = O-phospho-L-threonyl-[protein] + ADP + H(+). In terms of biological role, CIPK serine-threonine protein kinases interact with CBL proteins. Binding of a CBL protein to the regulatory NAF domain of CIPK protein lead to the activation of the kinase in a calcium-dependent manner. The chain is Putative CBL-interacting protein kinase 27 (CIPK27) from Oryza sativa subsp. japonica (Rice).